Consider the following 88-residue polypeptide: UPF0250 protein Swoo_3713 (88 aa).

This sequence belongs to the UPF0250 family.

In Shewanella woodyi (strain ATCC 51908 / MS32), this protein is UPF0250 protein Swoo_3713.